Reading from the N-terminus, the 342-residue chain is Peroxisomal membrane protein import receptor PEX19 (342 aa).

The segment covering 1–18 (MNENEYDNFDDLDDLLDE) has biased composition (acidic residues). 2 disordered regions span residues 1-68 (MNEN…DPEL) and 119-141 (CSSLKSNSTDKGTVNGSNPGFKN). The segment covering 41-54 (SENKEKNAESKDSD) has biased composition (basic and acidic residues). Ser62 carries the phosphoserine modification. At Ser304 the chain carries Phosphoserine. The tract at residues 321–342 (IDGNDPNLGNLDKELTDGCKQQ) is disordered. Positions 331–342 (LDKELTDGCKQQ) are enriched in basic and acidic residues. The residue at position 339 (Cys339) is a Cysteine methyl ester. A lipid anchor (S-farnesyl cysteine) is attached at Cys339. Residues 340 to 342 (KQQ) constitute a propeptide, removed in mature form.

Belongs to the peroxin-19 family. In terms of assembly, interacts (farnesylated) with PEX3; farnesylation is required for this interaction. Interacts with PEX2, PEX5, PEX10, PEX11, PEX12, PEX13, PEX14, PEX17, PEX22, PEX25, PEX30 and PEX32; the interaction requires well-defined PEX19-binding sites within the peroxisomal membrane protein targeting signal (mPTS) of the PMPs and is independent on the presence of PEX3. Interacts with VPS1.

The protein resides in the cytoplasm. It localises to the peroxisome membrane. The protein localises to the endoplasmic reticulum membrane. Required for proper post-translational import and stabilization of peroxisomal membrane proteins (PMPs). Acts as a cytosolic import receptor for PMPs and delivers them to the docking factor PEX3 at the peroxisomal membrane for subsequent insertion into the membrane. Acts as a chaperone in stabilizing or maintaining PMPs in the lipid bilayer. Directs PEX17, a peripheral component of the peroxisomal matrix protein translocation machinery, to peroxisomes. Stabilizes VPS1, a protein required for peroxisomal fission, at the peroxisomal membrane. Also acts in conjunction with PEX3 in the formation of peroxisomes from preperoxisomal compartments at the endoplasmic reticulum during de novo peroxisome synthesis, probably via the import of additional PMPs. This chain is Peroxisomal membrane protein import receptor PEX19 (PEX19), found in Saccharomyces cerevisiae (strain ATCC 204508 / S288c) (Baker's yeast).